Here is a 671-residue protein sequence, read N- to C-terminus: Probable boron transporter 6 (671 aa).

The Cytoplasmic segment spans residues Met-1 to Arg-37. Residues Ile-38 to Glu-58 traverse the membrane as a helical segment. The Extracellular segment spans residues Gln-59–Thr-77. A helical membrane pass occupies residues Ser-78–Ala-98. Residues Glu-99–Tyr-123 are Cytoplasmic-facing. The helical transmembrane segment at Leu-124–Phe-144 threads the bilayer. At Asn-145–Ala-157 the chain is on the extracellular side. A helical transmembrane segment spans residues Gly-158–Ile-178. Residues Ser-179–His-195 lie on the Cytoplasmic side of the membrane. A helical transmembrane segment spans residues Phe-196–Thr-216. Residues Ala-217–Ser-235 lie on the Extracellular side of the membrane. A helical membrane pass occupies residues Phe-236 to Val-256. Residues Pro-257 to Val-291 are Cytoplasmic-facing. A helical transmembrane segment spans residues Pro-292 to Phe-312. At Asp-313–Ser-332 the chain is on the extracellular side. A helical membrane pass occupies residues Ala-333 to Leu-353. Over Pro-354 to Ser-469 the chain is Cytoplasmic. A helical transmembrane segment spans residues Val-470 to Leu-490. At Trp-491–Gly-557 the chain is on the extracellular side. Residues Met-558–Ile-578 traverse the membrane as a helical segment. Over Arg-579–His-671 the chain is Cytoplasmic.

This sequence belongs to the anion exchanger (TC 2.A.31.3) family.

It localises to the membrane. Functionally, probable boron transporter. Boron is essential for maintaining the integrity of plants cell walls. The chain is Probable boron transporter 6 (BOR6) from Arabidopsis thaliana (Mouse-ear cress).